The primary structure comprises 429 residues: Light-independent protochlorophyllide reductase subunit N (429 aa).

[4Fe-4S] cluster is bound by residues C32, C57, and C118.

This sequence belongs to the BchN/ChlN family. In terms of assembly, protochlorophyllide reductase is composed of three subunits; BchL, BchN and BchB. Forms a heterotetramer of two BchB and two BchN subunits. Requires [4Fe-4S] cluster as cofactor.

The catalysed reaction is chlorophyllide a + oxidized 2[4Fe-4S]-[ferredoxin] + 2 ADP + 2 phosphate = protochlorophyllide a + reduced 2[4Fe-4S]-[ferredoxin] + 2 ATP + 2 H2O. Its pathway is porphyrin-containing compound metabolism; bacteriochlorophyll biosynthesis (light-independent). Its function is as follows. Component of the dark-operative protochlorophyllide reductase (DPOR) that uses Mg-ATP and reduced ferredoxin to reduce ring D of protochlorophyllide (Pchlide) to form chlorophyllide a (Chlide). This reaction is light-independent. The NB-protein (BchN-BchB) is the catalytic component of the complex. This Rhodopseudomonas palustris (strain TIE-1) protein is Light-independent protochlorophyllide reductase subunit N.